The chain runs to 226 residues: 2,3-bisphosphoglycerate-dependent phosphoglycerate mutase (226 aa).

Substrate-binding positions include 8 to 15 (RHGQSVWN), 21 to 22 (TG), Arg-58, 109 to 112 (ERMY), Lys-120, 136 to 137 (RR), and 180 to 181 (GN). His-9 acts as the Tele-phosphohistidine intermediate in catalysis. The active-site Proton donor/acceptor is the Glu-109.

Belongs to the phosphoglycerate mutase family. BPG-dependent PGAM subfamily.

It catalyses the reaction (2R)-2-phosphoglycerate = (2R)-3-phosphoglycerate. It participates in carbohydrate degradation; glycolysis; pyruvate from D-glyceraldehyde 3-phosphate: step 3/5. In terms of biological role, catalyzes the interconversion of 2-phosphoglycerate and 3-phosphoglycerate. The polypeptide is 2,3-bisphosphoglycerate-dependent phosphoglycerate mutase (Chlamydia muridarum (strain MoPn / Nigg)).